The sequence spans 205 residues: Heme ligase (205 aa).

The 156-residue stretch at 48 to 203 folds into the FAS1 domain; that stretch reads KRTIINLIYS…GVVHIVDKPI (156 aa). The segment at 154-172 is required for binding to host hemoglobin; the sequence is LRNLLNNDLIVKIEGEFKH. Heme binding domain regions lie at residues 171 to 181 and 191 to 200; these read KHCNHSIYLNG and CHNGVVHIVD.

Component of the hemozoin formation complex (HFC) composed of falcipains FP2A and/or FP2B, plasmepsins PMII, PMIII/HAP and PMIV, heme detoxifying protein HDP and falcilysin FLN. The HFC complex is involved in hemoglobin degradation and detoxification of heme in the food vacuole during the asexual blood stage. Interacts with falcipain 2; the interaction is direct and enhances HDP catalytic activity. Interacts with host hemoglobin.

It localises to the vacuole. It is found in the host cytoplasm. The protein localises to the host cytosol. The catalysed reaction is 2 Fe(III)-heme b = beta-hematin. Heme detoxifying enzyme that converts heme to crystalline hemozoin (beta-hematin) to protect the organism from the toxic effects of heme. During its development, P.falciparum proteolyzes vast amounts of host hemoglobin, leading to heme release. This chain is Heme ligase, found in Plasmodium falciparum (isolate 3D7).